The primary structure comprises 124 residues: Small ribosomal subunit protein uS12 (124 aa).

A disordered region spans residues 1-24; it reads MPTINQLVRQGRKKSVKKTNTPAL. 3-methylthioaspartic acid is present on D89.

It belongs to the universal ribosomal protein uS12 family. Part of the 30S ribosomal subunit. Contacts proteins S8 and S17. May interact with IF1 in the 30S initiation complex.

With S4 and S5 plays an important role in translational accuracy. Functionally, interacts with and stabilizes bases of the 16S rRNA that are involved in tRNA selection in the A site and with the mRNA backbone. Located at the interface of the 30S and 50S subunits, it traverses the body of the 30S subunit contacting proteins on the other side and probably holding the rRNA structure together. The combined cluster of proteins S8, S12 and S17 appears to hold together the shoulder and platform of the 30S subunit. The polypeptide is Small ribosomal subunit protein uS12 (Desulfotalea psychrophila (strain LSv54 / DSM 12343)).